Here is a 540-residue protein sequence, read N- to C-terminus: Putative BTB/POZ domain-containing protein R224 (540 aa).

Residues 16–88 (TDLELTLIDE…FYKNPIKYKN (73 aa)) form the BTB domain. A helical membrane pass occupies residues 356 to 376 (IFVSLLNDIIFVLSSINMYFI).

This sequence belongs to the mimivirus BTB/WD family.

Its subcellular location is the membrane. The polypeptide is Putative BTB/POZ domain-containing protein R224 (Acanthamoeba polyphaga (Amoeba)).